We begin with the raw amino-acid sequence, 140 residues long: Nucleoside diphosphate kinase (140 aa).

6 residues coordinate ATP: lysine 11, phenylalanine 59, arginine 87, threonine 93, arginine 104, and asparagine 114. Residue histidine 117 is the Pros-phosphohistidine intermediate of the active site.

Belongs to the NDK family. Homotetramer. Mg(2+) is required as a cofactor.

It is found in the cytoplasm. The catalysed reaction is a 2'-deoxyribonucleoside 5'-diphosphate + ATP = a 2'-deoxyribonucleoside 5'-triphosphate + ADP. The enzyme catalyses a ribonucleoside 5'-diphosphate + ATP = a ribonucleoside 5'-triphosphate + ADP. Major role in the synthesis of nucleoside triphosphates other than ATP. The ATP gamma phosphate is transferred to the NDP beta phosphate via a ping-pong mechanism, using a phosphorylated active-site intermediate. This Beijerinckia indica subsp. indica (strain ATCC 9039 / DSM 1715 / NCIMB 8712) protein is Nucleoside diphosphate kinase.